The following is a 240-amino-acid chain: Adapter protein MecA (240 aa).

Residues 119-132 are compositionally biased toward basic and acidic residues; the sequence is QRKQQKKNHQDKQQ. Residues 119 to 138 form a disordered region; sequence QRKQQKKNHQDKQQRRAHKP.

This sequence belongs to the MecA family. Homodimer.

Its function is as follows. Enables the recognition and targeting of unfolded and aggregated proteins to the ClpC protease or to other proteins involved in proteolysis. The polypeptide is Adapter protein MecA (Staphylococcus epidermidis (strain ATCC 35984 / DSM 28319 / BCRC 17069 / CCUG 31568 / BM 3577 / RP62A)).